The sequence spans 537 residues: ATP synthase subunit alpha (537 aa).

174 to 181 provides a ligand contact to ATP; sequence GDRQTGKT.

Belongs to the ATPase alpha/beta chains family. In terms of assembly, F-type ATPases have 2 components, CF(1) - the catalytic core - and CF(0) - the membrane proton channel. CF(1) has five subunits: alpha(3), beta(3), gamma(1), delta(1), epsilon(1). CF(0) has three main subunits: a(1), b(2) and c(9-12). The alpha and beta chains form an alternating ring which encloses part of the gamma chain. CF(1) is attached to CF(0) by a central stalk formed by the gamma and epsilon chains, while a peripheral stalk is formed by the delta and b chains.

The protein resides in the cell inner membrane. The catalysed reaction is ATP + H2O + 4 H(+)(in) = ADP + phosphate + 5 H(+)(out). Its function is as follows. Produces ATP from ADP in the presence of a proton gradient across the membrane. The alpha chain is a regulatory subunit. The polypeptide is ATP synthase subunit alpha (Verminephrobacter eiseniae (strain EF01-2)).